The sequence spans 196 residues: Large ribosomal subunit protein uL18 (196 aa).

This sequence belongs to the universal ribosomal protein uL18 family. In terms of assembly, part of the 50S ribosomal subunit. Contacts the 5S and 23S rRNAs.

Its function is as follows. This is one of the proteins that bind and probably mediate the attachment of the 5S RNA into the large ribosomal subunit, where it forms part of the central protuberance. The sequence is that of Large ribosomal subunit protein uL18 from Saccharolobus islandicus (strain Y.N.15.51 / Yellowstone #2) (Sulfolobus islandicus).